A 122-amino-acid polypeptide reads, in one-letter code: Large ribosomal subunit protein uL14 (122 aa).

Belongs to the universal ribosomal protein uL14 family. In terms of assembly, part of the 50S ribosomal subunit. Forms a cluster with proteins L3 and L19. In the 70S ribosome, L14 and L19 interact and together make contacts with the 16S rRNA in bridges B5 and B8.

In terms of biological role, binds to 23S rRNA. Forms part of two intersubunit bridges in the 70S ribosome. This chain is Large ribosomal subunit protein uL14, found in Bartonella quintana (strain Toulouse) (Rochalimaea quintana).